Consider the following 381-residue polypeptide: Putative steryl acetyl hydrolase mug81 (381 aa).

At M1–R9 the chain is on the cytoplasmic side. Residues I10–N30 form a helical; Signal-anchor for type II membrane protein membrane-spanning segment. At F31–E381 the chain is on the lumenal side. The short motif at H125 to G127 is the Involved in the stabilization of the negatively charged intermediate by the formation of the oxyanion hole element. N-linked (GlcNAc...) asparagine glycosylation occurs at N193. Residue S200 is part of the active site.

Belongs to the 'GDXG' lipolytic enzyme family.

It is found in the cytoplasm. It localises to the endoplasmic reticulum membrane. In terms of biological role, required for the deacetylation of acetylated sterols. Has a role in meiosis. The chain is Putative steryl acetyl hydrolase mug81 (mug180) from Schizosaccharomyces pombe (strain 972 / ATCC 24843) (Fission yeast).